Reading from the N-terminus, the 863-residue chain is Leucine--tRNA ligase (863 aa).

The short motif at 42–52 (PYPSGRLHMGH) is the 'HIGH' region element. The short motif at 622–626 (KMSKS) is the 'KMSKS' region element. Residue K625 coordinates ATP.

It belongs to the class-I aminoacyl-tRNA synthetase family.

It localises to the cytoplasm. The enzyme catalyses tRNA(Leu) + L-leucine + ATP = L-leucyl-tRNA(Leu) + AMP + diphosphate. This Shewanella sediminis (strain HAW-EB3) protein is Leucine--tRNA ligase.